The chain runs to 337 residues: Glyceraldehyde-3-phosphate dehydrogenase 3, cytosolic (337 aa).

Residues 1–151 are binding to NAD; the sequence is MAKIKIGING…YKSDINIVSN (151 aa). NAD(+) contacts are provided by residues 13-14, Asp-35, and Arg-82; that span reads RI. The catalytic stretch occupies residues 152–337; it reads ASCTTNCLAP…DLIRHMNSTK (186 aa). D-glyceraldehyde 3-phosphate contacts are provided by residues 153-155, Thr-184, 213-214, and Arg-236; these read SCT and TG. The active-site Nucleophile is Cys-154. Asn-318 is an NAD(+) binding site.

It belongs to the glyceraldehyde-3-phosphate dehydrogenase family. Homotetramer.

It localises to the cytoplasm. It carries out the reaction D-glyceraldehyde 3-phosphate + phosphate + NAD(+) = (2R)-3-phospho-glyceroyl phosphate + NADH + H(+). The protein operates within carbohydrate degradation; glycolysis; pyruvate from D-glyceraldehyde 3-phosphate: step 1/5. Key enzyme in glycolysis that catalyzes the first step of the pathway by converting D-glyceraldehyde 3-phosphate (G3P) into 3-phospho-D-glyceroyl phosphate. Essential for the maintenance of cellular ATP levels and carbohydrate metabolism. The polypeptide is Glyceraldehyde-3-phosphate dehydrogenase 3, cytosolic (GAPC3) (Zea mays (Maize)).